A 367-amino-acid polypeptide reads, in one-letter code: MKLSIDISELIQLGKKMLPEGVDFFLDESPIDFDPIDIELSTGKEVSIEDLDPGSGLISYHGRQVLLYIRDHSGRYDAAIVDGEKGKRFHIAWCRTLDEMRHKNRFERYHATNRIDGLFEIDDGSGRSQDVDLRVCMNCLERLNYKGSIDKQRKREIFKSFSLNEFFSDYSTCFRHMPKGIYDKTNSGYVENWKEISKEIREKANYVCNDCGVNLSTAKNLCHVHHKNGIKYDNHHENLLVLCKDCHRKQPLHEGIFVTQAEMAIIQRLRSQQGLLKAESWNEIYDLTDPSVHGDINMMQHKGFQPPVPGLDLQNSEHEIIATVEAAWPGLKIAVNLTPAEVEGWRIYTVGELVKEIQTGAFTPAKL.

Functionally, component of antiviral defense system Zorya type II, composed of ZorA, ZorB and ZorE. Expression of Zorya type II in E.coli (strain MG1655) confers resistance to phages SECphi7 and T7. While most T7 infected Zorya-containing cells undergo abortive infection, a minority produce viable phage progeny. These eventually accumulate to a high multiplicity of infection, leading to culture collapse by 170 minutes after initial infection. ZorA and ZorB probably assemble in the cell inner membrane and exert their effect there. This may be a nuclease. The polypeptide is Zorya protein ZorE (Escherichia coli (strain ATCC 8739 / DSM 1576 / NBRC 3972 / NCIMB 8545 / WDCM 00012 / Crooks)).